Here is a 214-residue protein sequence, read N- to C-terminus: MEKFVRHDGLVAPLDRANVDTDQIIPKQFLKSIKRTGFGPNLFDEWRYLDEGFPGQDNAARLVNNDFVLNQPDYQGASILLTRRNFGCGSSREHAPWALMDFGFKAIIAPSFADIFYNNCFKNGLLPIVLSEDNVEALFQVVSSKGGYRITIDLEGQQVIPESGEPLPFEIDEFRKHCLLNGLDEIGLTLNEADAIRAYERSRIEREPWVFADH.

Belongs to the LeuD family. LeuD type 1 subfamily. Heterodimer of LeuC and LeuD.

It carries out the reaction (2R,3S)-3-isopropylmalate = (2S)-2-isopropylmalate. It functions in the pathway amino-acid biosynthesis; L-leucine biosynthesis; L-leucine from 3-methyl-2-oxobutanoate: step 2/4. Its function is as follows. Catalyzes the isomerization between 2-isopropylmalate and 3-isopropylmalate, via the formation of 2-isopropylmaleate. The chain is 3-isopropylmalate dehydratase small subunit from Alcanivorax borkumensis (strain ATCC 700651 / DSM 11573 / NCIMB 13689 / SK2).